A 550-amino-acid polypeptide reads, in one-letter code: Silent protein UshA(0) (550 aa).

The signal sequence occupies residues 1-25; it reads MKFLKRGVALALLAAFALTTQPAQA. Positions 41, 43, 84, 116, 217, 252, and 254 each coordinate a divalent metal cation. A disulfide bond links Cys258 and Cys275. Substrate is bound by residues Phe429 and 498–504; that span reads FNATGGD.

Belongs to the 5'-nucleotidase family. Requires a divalent metal cation as cofactor.

The protein localises to the periplasm. This chain is Silent protein UshA(0) (ushA), found in Salmonella typhimurium (strain LT2 / SGSC1412 / ATCC 700720).